The following is a 746-amino-acid chain: Protein zyg-11 homolog (746 aa).

3 LRR repeats span residues 185–209 (LPRLESLDISNTSVSNLTPLLGLRS), 216–241 (MHQLKRLEMTTAQLLAVLSQLEVLQH), and 265–289 (LPQLVSLDVSGRKQVTDAAVKAFVE).

The protein belongs to the zyg-11 family.

In terms of biological role, serves as substrate adapter subunit in an E3 ubiquitin ligase complex zyg11-cul2-elongin BC. Targets substrates bearing N-terminal glycine degrons for proteasomal degradation. This chain is Protein zyg-11 homolog (zyg11), found in Danio rerio (Zebrafish).